A 357-amino-acid polypeptide reads, in one-letter code: Nicotinate-nucleotide--dimethylbenzimidazole phosphoribosyltransferase (357 aa).

E317 acts as the Proton acceptor in catalysis.

The protein belongs to the CobT family.

The catalysed reaction is 5,6-dimethylbenzimidazole + nicotinate beta-D-ribonucleotide = alpha-ribazole 5'-phosphate + nicotinate + H(+). Its pathway is nucleoside biosynthesis; alpha-ribazole biosynthesis; alpha-ribazole from 5,6-dimethylbenzimidazole: step 1/2. In terms of biological role, catalyzes the synthesis of alpha-ribazole-5'-phosphate from nicotinate mononucleotide (NAMN) and 5,6-dimethylbenzimidazole (DMB). The sequence is that of Nicotinate-nucleotide--dimethylbenzimidazole phosphoribosyltransferase from Halalkalibacterium halodurans (strain ATCC BAA-125 / DSM 18197 / FERM 7344 / JCM 9153 / C-125) (Bacillus halodurans).